The chain runs to 961 residues: Phosphofurin acidic cluster sorting protein 1 (961 aa).

The span at 1 to 19 (MAERGGAGGGPGGAGGGSS) shows a compositional bias: gly residues. 2 disordered regions span residues 1–70 (MAER…SSST) and 76–95 (VAVA…RTPA). The residue at position 2 (A2) is an N-acetylalanine. The segment covering 20 to 30 (QRGSGVAQSPQ) has biased composition (low complexity). At S28 the chain carries Phosphoserine. The segment covering 31 to 46 (QQPPQQPSQPQQPTPP) has biased composition (pro residues). T44 is modified (phosphothreonine). The segment covering 51-70 (ATSSSSSTSAAAASSSSSST) has biased composition (low complexity). Y249 is modified (phosphotyrosine). Over residues 260–271 (GIKSKLSDRSPD) the composition is skewed to basic and acidic residues. 2 disordered regions span residues 260 to 297 (GIKS…LHGQ) and 375 to 426 (NPSD…GKDT). Residues 274 to 291 (NYSEEEEESFSSEQEGSD) show a composition bias toward acidic residues. The stretch at 351–375 (HVSREQIREVEEDLDELYDSLEMYN) forms a coiled coil. A phosphoserine mark is found at S377 and S379. The span at 404-426 (MSQSSSQTEIGSLNSKGSLGKDT) shows a compositional bias: polar residues. Residues S428 and S493 each carry the phosphoserine modification. 2 disordered regions span residues 475-540 (EKVK…HSTQ) and 758-802 (SPST…SMSS). The residue at position 502 (T502) is a Phosphothreonine. Residues S517, S526, S527, S529, and S532 each carry the phosphoserine modification. Residues 768–802 (SPVVSLTVPSTSPPSSSGLSRDATATPPSSPSMSS) show a composition bias toward low complexity.

Belongs to the PACS family. In terms of assembly, associates with AP-1 and AP-3 but not with AP-2 complexes. Interacts with FURIN. Forms a ternary complex with furin and AP-1. Interacts with PKD2 (via acidic region). Interacts with SORL1. Interacts with WDR37.

It localises to the golgi apparatus. The protein localises to the trans-Golgi network. Its function is as follows. Coat protein that is involved in the localization of trans-Golgi network (TGN) membrane proteins that contain acidic cluster sorting motifs. Controls the endosome-to-Golgi trafficking of furin and mannose-6-phosphate receptor by connecting the acidic-cluster-containing cytoplasmic domain of these molecules with the adapter-protein complex-1 (AP-1) of endosomal clathrin-coated membrane pits. Required for normal ER Ca2+ handling in lymphocytes. Together with WDR37, it plays an essential role in lymphocyte development, quiescence and survival. Required for stabilizing peripheral lymphocyte populations. In Rattus norvegicus (Rat), this protein is Phosphofurin acidic cluster sorting protein 1 (Pacs1).